The primary structure comprises 1247 residues: Structural polyprotein (1247 aa).

A host transcription inhibition region spans residues 36–67; sequence RPAGQLAQLISAVSRLALRTVPQKPRRTRKIK. Residues 53–103 form a disordered region; the sequence is LRTVPQKPRRTRKIKKQKQVKQEQQSTRNQKKKAPKQKQTQKKKRPGRRER. Basic residues-rich tracts occupy residues 59–71 and 81–100; these read KPRRTRKIKKQKQ and NQKKKAPKQKQTQKKKRPGR. The Nuclear localization signal motif lies at 60 to 98; sequence PRRTRKIKKQKQVKQEQQSTRNQKKKAPKQKQTQKKKRP. Residues 83-113 are binding to the viral RNA; it reads KKKAPKQKQTQKKKRPGRRERMCMKIENDCI. Residues 98-112 are ribosome-binding; it reads PGRRERMCMKIENDC. Cysteine 112 and cysteine 127 are joined by a disulfide. One can recognise a Peptidase S3 domain in the interval 112–260; it reads CIFEVKHEGK…KITPEGSVEW (149 aa). The Charge relay system role is filled by histidine 138. The Nuclear export signal signature appears at 143–153; sequence IDNADLAKLAF. The segment at 154 to 159 is interaction with spike glycoprotein E2; it reads KRSSKY. The active-site Charge relay system is the aspartate 160. A dimerization of the capsid protein region spans residues 182 to 192; it reads PEGYYNWHHGA. The active-site Charge relay system is serine 212. The tract at residues 218–222 is dimerization of the capsid protein; the sequence is DNKGR. Residues 261-273 form a functions as an uncleaved signal peptide for the precursor of protein E3/E2 region; the sequence is SLALPVMCLLANT. 9 cysteine pairs are disulfide-bonded: cysteine 268/cysteine 277, cysteine 282/cysteine 286, cysteine 285/cysteine 317, cysteine 343/cysteine 449, cysteine 346/cysteine 352, cysteine 415/cysteine 429, cysteine 477/cysteine 590, cysteine 525/cysteine 549, and cysteine 527/cysteine 544. Asparagine 272 carries N-linked (GlcNAc...) asparagine; by host glycosylation. Over 325–691 the chain is Extracellular; the sequence is NARENFNVYK…YYYELYPTTT (367 aa). N-linked (GlcNAc...) asparagine; by host glycosylation is present at asparagine 587. A helical membrane pass occupies residues 692–712; it reads IAVLAAASIVVASLVGLSLGM. Over 713–747 the chain is Cytoplasmic; it reads CICARRRCITPYELTPGATIPFLLGILCCVKTAKA. Positions 715 to 719 are interaction with the capsid protein; that stretch reads CARRR. Residues cysteine 720, cysteine 740, and cysteine 741 are each lipidated (S-palmitoyl cysteine; by host). The tract at residues 720 to 740 is transient transmembrane before p62-6K protein processing; sequence CITPYELTPGATIPFLLGILC. An intrachain disulfide couples cysteine 720 to cysteine 741. The Extracellular portion of the chain corresponds to 748–762; sequence ASYYEAATYLWNEQQ. A helical membrane pass occupies residues 763–783; sequence PLFWLQLLIPLSAAIVVCNCL. Topologically, residues 784 to 787 are cytoplasmic; it reads KLLP. Residues 788–808 traverse the membrane as a helical segment; that stretch reads CCCKTLTFLAVMSIGARTVSA. The Extracellular portion of the chain corresponds to 809–1223; sequence YEHATVIPNT…AMSWVQKITG (415 aa). Cystine bridges form between cysteine 857/cysteine 922, cysteine 870/cysteine 902, cysteine 871/cysteine 904, and cysteine 876/cysteine 886. Positions 892–909 are E1 fusion peptide loop; it reads VYPFMWGGAYCFCDAENT. N-linked (GlcNAc...) asparagine; by host glycans are attached at residues asparagine 949 and asparagine 1078. Disulfide bonds link cysteine 1067/cysteine 1079, cysteine 1109/cysteine 1184, cysteine 1114/cysteine 1188, and cysteine 1136/cysteine 1178. The chain crosses the membrane as a helical span at residues 1224 to 1244; the sequence is GVGLVVAIAALILIIVLCVSF. Cysteine 1241 carries S-palmitoyl cysteine; by host lipidation. Residues 1245–1247 lie on the Cytoplasmic side of the membrane; that stretch reads SRH.

As to quaternary structure, homodimer. Homomultimer. Interacts with host karyopherin KPNA4; this interaction allows the nuclear import of the viral capsid protein. Interacts with spike glycoprotein E2. Interacts with host IRAK1; the interaction leads to inhibition of IRAK1-dependent signaling. In terms of assembly, the precursor of protein E3/E2 and E1 form a heterodimer shortly after synthesis. The precursor of protein E3/E2 and E1 form a heterodimer shortly after synthesis. Processing of the precursor of protein E3/E2 into E2 and E3 results in a heterodimer of the spike glycoproteins E2 and E1. Spike at virion surface are constituted of three E2-E1 heterodimers. After target cell attachment and endocytosis, E1 change conformation to form homotrimers. Interacts with 6K protein. As to quaternary structure, interacts with spike glycoprotein E1. Processing of the precursor of protein E3/E2 into E2 and E3 results in a heterodimer of the spike glycoproteins E2 and E1. Spike at virion surface are constituted of a trimer of E2-E1 heterodimers. Interacts with 6K protein. Interacts with host MXRA8; this interaction mediates virus entry. In terms of assembly, oligomer. Interacts with spike glycoprotein E1. Interacts with spike glycoprotein E2. In terms of processing, structural polyprotein: Specific enzymatic cleavages in vivo yield mature proteins. Capsid protein is auto-cleaved during polyprotein translation, unmasking a signal peptide at the N-terminus of the precursor of E3/E2. The remaining polyprotein is then targeted to the host endoplasmic reticulum, where host signal peptidase cleaves it into pE2, 6K and E1 proteins. pE2 is further processed to mature E3 and E2 by host furin in trans-Golgi vesicle. Palmitoylated via thioester bonds. These palmitoylations may induce disruption of the C-terminus transmembrane. This would result in the reorientation of E2 C-terminus from lumenal to cytoplasmic side. Post-translationally, N-glycosylated. In terms of processing, palmitoylated via thioester bonds.

Its subcellular location is the virion. The protein localises to the host cytoplasm. It localises to the host cell membrane. It is found in the host nucleus. The protein resides in the virion membrane. Its subcellular location is the host Golgi apparatus. The protein localises to the host trans-Golgi network. It localises to the host endoplasmic reticulum. It carries out the reaction Autocatalytic release of the core protein from the N-terminus of the togavirus structural polyprotein by hydrolysis of a -Trp-|-Ser- bond.. Functionally, forms an icosahedral capsid with a T=4 symmetry composed of 240 copies of the capsid protein surrounded by a lipid membrane through which penetrate 80 spikes composed of trimers of E1-E2 heterodimers. The capsid protein binds to the viral RNA genome at a site adjacent to a ribosome binding site for viral genome translation following genome release. Possesses a protease activity that results in its autocatalytic cleavage from the nascent structural protein. Following its self-cleavage, the capsid protein transiently associates with ribosomes, and within several minutes the protein binds to viral RNA and rapidly assembles into icosahedric core particles. The resulting nucleocapsid eventually associates with the cytoplasmic domain of the spike glycoprotein E2 at the cell membrane, leading to budding and formation of mature virions. In case of infection, new virions attach to target cells and after clathrin-mediated endocytosis their membrane fuses with the host endosomal membrane. This leads to the release of the nucleocapsid into the cytoplasm, followed by an uncoating event necessary for the genomic RNA to become accessible. The uncoating might be triggered by the interaction of capsid proteins with ribosomes. Binding of ribosomes would release the genomic RNA since the same region is genomic RNA-binding and ribosome-binding. Specifically inhibits interleukin-1 receptor-associated kinase 1/IRAK1-dependent signaling during viral entry, representing a means by which the alphaviruses may evade innate immune detection and activation prior to viral gene expression. Provides the signal sequence for the translocation of the precursor of protein E3/E2 to the host endoplasmic reticulum. Furin-cleaved E3 remains associated with spike glycoprotein E1 and mediates pH protection of the latter during the transport via the secretory pathway. After virion release from the host cell, the assembly protein E3 is gradually released in the extracellular space. In terms of biological role, plays a role in viral attachment to target host cell, by binding to the cell receptor MXRA8. Synthesized as a p62 precursor which is processed by furin at the cell membrane just before virion budding, giving rise to E2-E1 heterodimer. The p62-E1 heterodimer is stable, whereas E2-E1 is unstable and dissociate at low pH. p62 is processed at the last step, presumably to avoid E1 fusion activation before its final export to cell surface. E2 C-terminus contains a transitory transmembrane that would be disrupted by palmitoylation, resulting in reorientation of the C-terminal tail from lumenal to cytoplasmic side. This step is critical since E2 C-terminus is involved in budding by interacting with capsid proteins. This release of E2 C-terminus in cytoplasm occurs lately in protein export, and precludes premature assembly of particles at the endoplasmic reticulum membrane. Its function is as follows. Acts as a viroporin that participates in virus glycoprotein processing and transport to the plasma membrane, cell permeabilization and budding of viral particles. Disrupts the calcium homeostasis of the cell, probably at the endoplasmic reticulum level. This leads to cytoplasmic calcium elevation. Because of its lipophilic properties, the 6K protein is postulated to influence the selection of lipids that interact with the transmembrane domains of the glycoproteins, which, in turn, affects the deformability of the bilayer required for the extreme curvature that occurs as budding proceeds. Present in low amount in virions, about 3% compared to viral glycoproteins. Functionally, class II viral fusion protein. Fusion activity is inactive as long as E1 is bound to E2 in mature virion. After virus attachment to target cell via host MXRA8 and endocytosis, acidification of the endosome induce dissociation of E1/E2 heterodimer and concomitant trimerization of the E1 subunits. This E1 trimer is fusion active, and promotes release of viral nucleocapsid in cytoplasm after endosome and viral membrane fusion. Efficient fusion requires the presence of cholesterol and sphingolipid in the target membrane. In Anopheles (Human), this protein is Structural polyprotein.